Consider the following 367-residue polypeptide: Alanine racemase (367 aa).

Lys-40 functions as the Proton acceptor; specific for D-alanine in the catalytic mechanism. Lys-40 carries the post-translational modification N6-(pyridoxal phosphate)lysine. Residue Arg-136 coordinates substrate. Residue Tyr-263 is the Proton acceptor; specific for L-alanine of the active site. Substrate is bound at residue Met-310.

This sequence belongs to the alanine racemase family. Pyridoxal 5'-phosphate is required as a cofactor.

The catalysed reaction is L-alanine = D-alanine. The protein operates within amino-acid biosynthesis; D-alanine biosynthesis; D-alanine from L-alanine: step 1/1. Catalyzes the interconversion of L-alanine and D-alanine. May also act on other amino acids. The chain is Alanine racemase (alr) from Streptococcus pneumoniae (strain Hungary19A-6).